The sequence spans 178 residues: ATP synthase subunit delta (178 aa).

The protein belongs to the ATPase delta chain family. As to quaternary structure, F-type ATPases have 2 components, F(1) - the catalytic core - and F(0) - the membrane proton channel. F(1) has five subunits: alpha(3), beta(3), gamma(1), delta(1), epsilon(1). F(0) has three main subunits: a(1), b(2) and c(10-14). The alpha and beta chains form an alternating ring which encloses part of the gamma chain. F(1) is attached to F(0) by a central stalk formed by the gamma and epsilon chains, while a peripheral stalk is formed by the delta and b chains.

Its subcellular location is the cell inner membrane. Functionally, f(1)F(0) ATP synthase produces ATP from ADP in the presence of a proton or sodium gradient. F-type ATPases consist of two structural domains, F(1) containing the extramembraneous catalytic core and F(0) containing the membrane proton channel, linked together by a central stalk and a peripheral stalk. During catalysis, ATP synthesis in the catalytic domain of F(1) is coupled via a rotary mechanism of the central stalk subunits to proton translocation. In terms of biological role, this protein is part of the stalk that links CF(0) to CF(1). It either transmits conformational changes from CF(0) to CF(1) or is implicated in proton conduction. This is ATP synthase subunit delta from Nitrosospira multiformis (strain ATCC 25196 / NCIMB 11849 / C 71).